Consider the following 304-residue polypeptide: uncharacterized protein (304 aa).

A compositionally biased stretch (basic residues) spans 1–10; sequence MLWAHRKKRK. Positions 1–28 are disordered; that stretch reads MLWAHRKKRKAATETTEDKPLESHRAND. A compositionally biased stretch (basic and acidic residues) spans 16 to 27; the sequence is TEDKPLESHRAN. S39 is modified (phosphoserine). Positions 91 to 101 are enriched in polar residues; the sequence is KQKISGSSMTK. Disordered stretches follow at residues 91–115, 138–160, and 190–304; these read KQKI…SMED, SMLQ…ISPE, and SHTV…IYGS. A compositionally biased stretch (basic and acidic residues) spans 151–160; the sequence is HAESRNISPE. At S158 the chain carries Phosphoserine. Low complexity predominate over residues 195–206; sequence SQSRHSNQSHHS. The segment covering 208–223 has biased composition (polar residues); the sequence is PSHQSNQSHPVYSSYQ. A compositionally biased stretch (low complexity) spans 229–248; it reads HLSPQSYPSYSSHQSHPGHS. Positions 249–263 are enriched in polar residues; it reads NHQGHSGLSSHQTHL. Positions 264-292 are enriched in low complexity; it reads GHSNHQGHPGHSSHQSHQGQPGHPSHQSH.

This is an uncharacterized protein from Mus musculus (Mouse).